The chain runs to 491 residues: MWLRVFTAFLSFTAGACSGLKVAVPSHTVHGIRGQALYLPVHYGFHTPASDIQVIWLFERPHTMPKYLLGSVNKSVVPDLEYQHKFTMMPPNASLLINPLQFTDEGNYIVKVNIQGNGTLSASQKIQVTVDDPVTKPVVQIQPSSGAVEYVGNMTLTCLVEGGSRRVYQWLKNGRPVHTSSTNSFSLQNSSLHIAPVTKEDIGNYSCLVKNPVSRMESDIIMPTIYYGPYGLRVNSDRGLKVGEVFTVDIGEAILFDCSADSYPPNTYSWIQRTNNATYVIKHGPRLEVASEKIAQKTTDYMCCAYNNITGRRDETHFTVIITSVGIEKLAQKGKSLSPLASITGISLFLIISMCLLFLWKKFQPYKVIKQKLEGRPETEYRKARTFSGHEDALDDFGIYEFVAFPDASGVARMPARSVPACDGVPGQDLHSTIYEVIHHIPAQQQDHPESSSQDGEEDACLDRHDEAGLQELGHCKEQDKGKHSRAKQCI.

The first 18 residues, 1 to 18 (MWLRVFTAFLSFTAGACS), serve as a signal peptide directing secretion. Asn-73, Asn-117, and Asn-153 each carry an N-linked (GlcNAc...) asparagine glycan. 2 consecutive Ig-like C2-type domains span residues 137–221 (PVVQ…SDII) and 223–319 (PTIY…THFT). 2 cysteine pairs are disulfide-bonded: Cys-158–Cys-207 and Cys-258–Cys-303. A glycan (N-linked (GlcNAc...) asparagine) is linked at Asn-308. Residues 340–360 (LASITGISLFLIISMCLLFLW) form a helical membrane-spanning segment. Residues 361–491 (KKFQPYKVIK…GKHSRAKQCI (131 aa)) are Cytoplasmic-facing. The span at 444 to 454 (QQQDHPESSSQ) shows a compositional bias: polar residues. Disordered regions lie at residues 444 to 466 (QQQD…DRHD) and 472 to 491 (ELGH…KQCI). The span at 472-482 (ELGHCKEQDKG) shows a compositional bias: basic and acidic residues.

Post-translationally, poly-ADP-ribosylated (PARsylated) by tankyrase TNKS during late G2 and prophase, leading to translocation to mitotic centrosomes. In terms of processing, N-glycosylated.

The protein resides in the golgi apparatus membrane. It localises to the cytoplasm. Its subcellular location is the cytoskeleton. It is found in the spindle. The protein localises to the microtubule organizing center. The protein resides in the centrosome. It localises to the midbody. Its function is as follows. Required during prometaphase for centrosome maturation. Following poly-ADP-ribosylation (PARsylation) by TNKS, translocates from the Golgi apparatus to mitotic centrosomes and plays a key role in the formation of robust microtubules for prompt movement of chromosomes: anchors AKAP9/CG-NAP, a scaffold protein of the gamma-tubulin ring complex and promotes centrosome maturation. This chain is HEPACAM family member 2 (HEPACAM2), found in Bos taurus (Bovine).